We begin with the raw amino-acid sequence, 406 residues long: Bifunctional enzyme IspD/IspF (406 aa).

Positions 1–247 (MSLIRVNGEA…AFFFNPAKDT (247 aa)) are 2-C-methyl-D-erythritol 4-phosphate cytidylyltransferase. Residues 248-406 (FIGMGFDTHA…HVSMRYKQKL (159 aa)) are 2-C-methyl-D-erythritol 2,4-cyclodiphosphate synthase. 2 residues coordinate a divalent metal cation: aspartate 254 and histidine 256. 4-CDP-2-C-methyl-D-erythritol 2-phosphate is bound by residues 254-256 (DTH) and 280-281 (HS). Position 288 (histidine 288) interacts with a divalent metal cation. Residues 302–304 (DIG), 307–311 (FPDND), 378–381 (TTME), phenylalanine 385, and lysine 388 contribute to the 4-CDP-2-C-methyl-D-erythritol 2-phosphate site.

In the N-terminal section; belongs to the IspD/TarI cytidylyltransferase family. IspD subfamily. It in the C-terminal section; belongs to the IspF family. The cofactor is a divalent metal cation.

The enzyme catalyses 2-C-methyl-D-erythritol 4-phosphate + CTP + H(+) = 4-CDP-2-C-methyl-D-erythritol + diphosphate. It carries out the reaction 4-CDP-2-C-methyl-D-erythritol 2-phosphate = 2-C-methyl-D-erythritol 2,4-cyclic diphosphate + CMP. It functions in the pathway isoprenoid biosynthesis; isopentenyl diphosphate biosynthesis via DXP pathway; isopentenyl diphosphate from 1-deoxy-D-xylulose 5-phosphate: step 2/6. It participates in isoprenoid biosynthesis; isopentenyl diphosphate biosynthesis via DXP pathway; isopentenyl diphosphate from 1-deoxy-D-xylulose 5-phosphate: step 4/6. Functionally, bifunctional enzyme that catalyzes the formation of 4-diphosphocytidyl-2-C-methyl-D-erythritol from CTP and 2-C-methyl-D-erythritol 4-phosphate (MEP) (IspD), and catalyzes the conversion of 4-diphosphocytidyl-2-C-methyl-D-erythritol 2-phosphate (CDP-ME2P) to 2-C-methyl-D-erythritol 2,4-cyclodiphosphate (ME-CPP) with a corresponding release of cytidine 5-monophosphate (CMP) (IspF). The chain is Bifunctional enzyme IspD/IspF from Helicobacter pylori (strain HPAG1).